The chain runs to 269 residues: MNSPLAHAIPDVQNSEDSRQIAINKVGIKSIRHPVKVSDKNGGVQHTVANFNMYVGLPHNFKGTHMSRFIEILNSNEREISVESFEPMLREMVKRLEAETGHVEMTFPYFINKSAPVSGVQSLMDYEVTFTGEIHEGGRYEFTMKVVVPVTSLCPCSKKISAYGAHNQRSHVTVTATLNDHLWIEDVVQLVEGQASCEVYGLLKRPDEKYVTERAYDNPKFVEDMVRDVAGLLNKEVRIDAYAVESENFESIHNHSAYALIERDKRIEA.

This sequence belongs to the GTP cyclohydrolase IV family.

It catalyses the reaction GTP + H2O = 7,8-dihydroneopterin 3'-triphosphate + formate + H(+). It participates in cofactor biosynthesis; 7,8-dihydroneopterin triphosphate biosynthesis; 7,8-dihydroneopterin triphosphate from GTP: step 1/1. In terms of biological role, converts GTP to 7,8-dihydroneopterin triphosphate. The polypeptide is GTP cyclohydrolase FolE2 (Azoarcus sp. (strain BH72)).